The chain runs to 150 residues: MKLNELYNNLGAKKNKKRIARGIGSGKGKTAGRGIKGQKSRSGVAIKGFEGGQTPMIKRLPKRGFKCISTKKYNIINIYNIEEALTDGRLSTNDIITKEKLLEVGLINNKNLVKLLSICSDDFASPLSLKLDAYSSKAKYLIEKVGGQLL.

The protein belongs to the universal ribosomal protein uL15 family. Part of the 50S ribosomal subunit.

Its function is as follows. Binds to the 23S rRNA. The protein is Large ribosomal subunit protein uL15 of Rickettsia prowazekii (strain Madrid E).